A 580-amino-acid polypeptide reads, in one-letter code: Long-chain-fatty-acid--AMP ligase FadD28 (580 aa).

Residues 421-440 (SERTFGGKIVTPSPGTPEGP) form a disordered region.

The protein belongs to the ATP-dependent AMP-binding enzyme family.

The enzyme catalyses holo-[mycocerosate synthase] + a long-chain fatty acid + ATP = a long-chain fatty acyl-[mycocerosate synthase] + AMP + diphosphate. The catalysed reaction is a long-chain fatty acid + ATP + H(+) = a long-chain fatty acyl-AMP + diphosphate. It carries out the reaction holo-[mycocerosate synthase] + a long-chain fatty acyl-AMP = a long-chain fatty acyl-[mycocerosate synthase] + AMP + H(+). It participates in lipid metabolism; fatty acid biosynthesis. In terms of biological role, involved in the biosynthesis of phthiocerol dimycocerosate (PDIM), a cell wall-associated lipid found only in pathogenic mycobacteria. Catalyzes the activation of long-chain fatty acids as acyl-adenylates (acyl-AMP), which are then transferred to the multifunctional polyketide synthase Mas for further chain extension. The polypeptide is Long-chain-fatty-acid--AMP ligase FadD28 (fadD28) (Mycobacterium tuberculosis (strain CDC 1551 / Oshkosh)).